The following is a 69-amino-acid chain: Large ribosomal subunit protein bL32c (69 aa).

This sequence belongs to the bacterial ribosomal protein bL32 family.

It is found in the plastid. The protein resides in the chloroplast. The sequence is that of Large ribosomal subunit protein bL32c (rpl32) from Anthoceros angustus (Hornwort).